Consider the following 540-residue polypeptide: NADH-quinone oxidoreductase subunit N (540 aa).

Transmembrane regions (helical) follow at residues 24–44 (LSPM…EAFL), 54–74 (LVLA…LAGT), 88–108 (PTLF…LIIA), 158–178 (APGH…MLLF), 184–204 (LLTM…LCGL), 219–239 (YFLL…LLYG), 263–283 (ALIG…AVPF), 295–315 (PTPI…GAML), 331–351 (PVMW…AVTQ), 357–377 (MLAY…VAAN), 385–405 (MFYL…VTLV), 428–448 (VGGV…TSGF), 462–482 (GAVP…FFYV), and 505–525 (MFTA…GILP).

It belongs to the complex I subunit 2 family. As to quaternary structure, NDH-1 is composed of 14 different subunits. Subunits NuoA, H, J, K, L, M, N constitute the membrane sector of the complex.

It is found in the cell membrane. The enzyme catalyses a quinone + NADH + 5 H(+)(in) = a quinol + NAD(+) + 4 H(+)(out). In terms of biological role, NDH-1 shuttles electrons from NADH, via FMN and iron-sulfur (Fe-S) centers, to quinones in the respiratory chain. The immediate electron acceptor for the enzyme in this species is believed to be a menaquinone. Couples the redox reaction to proton translocation (for every two electrons transferred, four hydrogen ions are translocated across the cytoplasmic membrane), and thus conserves the redox energy in a proton gradient. This is NADH-quinone oxidoreductase subunit N from Rhodococcus opacus (strain B4).